The sequence spans 423 residues: Gamma-glutamyl phosphate reductase (423 aa).

The protein belongs to the gamma-glutamyl phosphate reductase family.

The protein resides in the cytoplasm. The enzyme catalyses L-glutamate 5-semialdehyde + phosphate + NADP(+) = L-glutamyl 5-phosphate + NADPH + H(+). The protein operates within amino-acid biosynthesis; L-proline biosynthesis; L-glutamate 5-semialdehyde from L-glutamate: step 2/2. Catalyzes the NADPH-dependent reduction of L-glutamate 5-phosphate into L-glutamate 5-semialdehyde and phosphate. The product spontaneously undergoes cyclization to form 1-pyrroline-5-carboxylate. The polypeptide is Gamma-glutamyl phosphate reductase (Pseudomonas putida (strain ATCC 47054 / DSM 6125 / CFBP 8728 / NCIMB 11950 / KT2440)).